Consider the following 362-residue polypeptide: Neisseria adhesin A (362 aa).

A signal peptide spans 1–23 (MKHFPSKVLTTAILATFCSGALA). A head domain region spans residues 24-169 (ATSDDDVKKA…NIVKIDEKLE (146 aa)). Coiled coils occupy residues 90–146 (VTNL…LNKL) and 183–288 (NDIA…KETR). The segment at 170–307 (AVADTVDKHA…SGLFQPYNVG (138 aa)) is coiled stalk domain. A run of 4 beta stranded transmembrane segments spans residues 307–317 (GRFNVTAAVGG), 321–332 (ESAVAIGTGFRF), 339–345 (KAGVAVG), and 351–362 (SAAYHVGVNYEW). Positions 308-362 (RFNVTAAVGGYKSESAVAIGTGFRFTENFAAKAGVAVGTSSGSSAAYHVGVNYEW) are translocator domain.

Belongs to the autotransporter-2 (AT-2) (TC 1.B.40) family. As to quaternary structure, forms high molecular weight oligomers in whole cell extracts that are not disrupted by boiling in SDS buffer. Homotrimer. A fragment containing the N-terminal half of the mature protein (residues 24-210, head domain plus part of the stalk) binds human integrin beta-1 (ITGB1). It was not seen to bind immobilized purified CEACAMs 1, 3, 5, 6 or 8 nor commercially prepared type I collagen, fibronectin or matrigel.

It localises to the cell surface. The protein resides in the cell outer membrane. Adheres to and induces bacterial uptake by human epithelial cells. Upon expression in engineered Y.enterocolitica confers an 11- to 15-fold increase in bacterial adherence and uptake by human epithelial cell lines; part of the uptake is mediated by integrin beta-1 (ITGB1) suggesting it may be a human receptor for NadA. A bacterial cell surface protein; antisera against this protein induce complement-mediated killing of this and other strains. The polypeptide is Neisseria adhesin A (Neisseria meningitidis serogroup B (strain ATCC BAA-335 / MC58)).